The following is a 428-amino-acid chain: Light-independent protochlorophyllide reductase subunit N (428 aa).

[4Fe-4S] cluster contacts are provided by Cys-29, Cys-54, and Cys-115.

This sequence belongs to the BchN/ChlN family. As to quaternary structure, protochlorophyllide reductase is composed of three subunits; BchL, BchN and BchB. Forms a heterotetramer of two BchB and two BchN subunits. Requires [4Fe-4S] cluster as cofactor.

The catalysed reaction is chlorophyllide a + oxidized 2[4Fe-4S]-[ferredoxin] + 2 ADP + 2 phosphate = protochlorophyllide a + reduced 2[4Fe-4S]-[ferredoxin] + 2 ATP + 2 H2O. Its pathway is porphyrin-containing compound metabolism; bacteriochlorophyll biosynthesis (light-independent). In terms of biological role, component of the dark-operative protochlorophyllide reductase (DPOR) that uses Mg-ATP and reduced ferredoxin to reduce ring D of protochlorophyllide (Pchlide) to form chlorophyllide a (Chlide). This reaction is light-independent. The NB-protein (BchN-BchB) is the catalytic component of the complex. The protein is Light-independent protochlorophyllide reductase subunit N of Cereibacter sphaeroides (strain ATCC 17029 / ATH 2.4.9) (Rhodobacter sphaeroides).